A 484-amino-acid polypeptide reads, in one-letter code: MGKDKTLPLLDPREPPELTGTKSASKVWAKEFGEESKRLWELAGPAIFTAISQYSLGALTQTFSGRLGELELAAVSVENSVISGLAFGVMLGMGSALETLCGQAYGAGQIRMMGIYMQRSWVILFTTALFLLPVYIWAPPILSFFGEAPHISKAAGKFALWMIPQLFAYAANFPIQKFLQSQRKVLVMAWISGVVLVIHAVFSWLFILYFKWGLVGAAITLNTSWWLIVIGQLLYILITKSDGAWTGFSMLAFRDLYGFVKLSLASALMLCLEFWYLMVLVVVTGLLPNPLIPVDAISICMNIEGWTAMISIGFNAAISVRVSNELGAGNAALAKFSVIVVSITSTLIGIVCMIVVLATKDSFPYLFTSSEAVAAETTRIAVLLGFTVLLNSLQPVLSGVAVGAGWQALVAYVNIACYYIIGLPAGLVLGFTLDLGVQGIWGGMVAGICLQTLILIGIIYFTNWNKEAEQAESRVQRWGGTAQE.

The span at 1–16 (MGKDKTLPLLDPREPP) shows a compositional bias: basic and acidic residues. The segment at 1 to 22 (MGKDKTLPLLDPREPPELTGTK) is disordered. The next 12 helical transmembrane spans lie at 39–59 (LWEL…LGAL), 81–101 (VISG…ETLC), 122–142 (VILF…PPIL), 155–175 (AGKF…NFPI), 190–210 (WISG…ILYF), 218–238 (AITL…YILI), 267–287 (ALML…TGLL), 294–314 (VDAI…SIGF), 338–358 (VIVV…VVLA), 380–400 (IAVL…LSGV), 409–429 (LVAY…GLVL), and 439–459 (GIWG…IGII).

The protein belongs to the multi antimicrobial extrusion (MATE) (TC 2.A.66.1) family.

It localises to the membrane. The chain is Protein DETOXIFICATION 33 from Arabidopsis thaliana (Mouse-ear cress).